The chain runs to 563 residues: Membrane protein insertase YidC (563 aa).

A helical transmembrane segment spans residues 1–21 (MDIKRTILIVALAIVTYVGVL). The segment at 43-62 (APGIPDTAAGTNGSASADVP) is disordered. 5 helical membrane-spanning segments follow: residues 344–364 (LELTVDYGFLWFIAQPIFWLL), 370–390 (ILGNWGWSIIVLTMLIKGLFF), 440–460 (LGGCLPILVQMPVFLSLYWVL), 471–491 (WILWITDLSIKDPFFILPIIM), and 518–538 (PIIFTFFFLWFPAGLVLYWVV).

This sequence belongs to the OXA1/ALB3/YidC family. Type 1 subfamily. In terms of assembly, interacts with the Sec translocase complex via SecD. Specifically interacts with transmembrane segments of nascent integral membrane proteins during membrane integration.

The protein localises to the cell inner membrane. Functionally, required for the insertion and/or proper folding and/or complex formation of integral membrane proteins into the membrane. Involved in integration of membrane proteins that insert both dependently and independently of the Sec translocase complex, as well as at least some lipoproteins. Aids folding of multispanning membrane proteins. The sequence is that of Membrane protein insertase YidC from Pseudomonas syringae pv. syringae (strain B728a).